Consider the following 1106-residue polypeptide: Probable LRR receptor-like serine/threonine-protein kinase At1g74360 (1106 aa).

The first 34 residues, methionine 1–alanine 34, serve as a signal peptide directing secretion. Residues glycine 35–serine 736 are Extracellular-facing. LRR repeat units lie at residues arginine 86–alanine 109, leucine 110–cysteine 134, asparagine 136–leucine 156, serine 157–asparagine 182, leucine 184–glycine 204, cysteine 205–phenylalanine 226, and glycine 227–glycine 250. Residues asparagine 93 and asparagine 106 are each glycosylated (N-linked (GlcNAc...) asparagine). N-linked (GlcNAc...) asparagine glycosylation occurs at asparagine 141. 2 N-linked (GlcNAc...) asparagine glycosylation sites follow: asparagine 188 and asparagine 193. N-linked (GlcNAc...) asparagine glycans are attached at residues asparagine 242 and asparagine 251. LRR repeat units lie at residues cysteine 252–cysteine 275, glutamine 276–isoleucine 299, serine 300–leucine 323, asparagine 325–arginine 346, threonine 348–lysine 371, leucine 372–isoleucine 396, serine 398–asparagine 419, methionine 420–lysine 443, threonine 445–cysteine 468, serine 470–methionine 492, valine 566–methionine 593, aspartate 594–leucine 617, leucine 619–leucine 640, lysine 641–leucine 664, and glutamate 666–threonine 690. Residues asparagine 309 and asparagine 322 are each glycosylated (N-linked (GlcNAc...) asparagine). 4 N-linked (GlcNAc...) asparagine glycosylation sites follow: asparagine 365, asparagine 374, asparagine 384, and asparagine 408. N-linked (GlcNAc...) asparagine glycosylation is found at asparagine 454 and asparagine 467. N-linked (GlcNAc...) asparagine glycans are attached at residues asparagine 623, asparagine 628, asparagine 652, asparagine 671, asparagine 709, and asparagine 713. Residues leucine 737–valine 757 traverse the membrane as a helical segment. The Cytoplasmic segment spans residues lysine 758–methionine 1106. Threonine 803 and threonine 811 each carry phosphothreonine. A Protein kinase domain is found at phenylalanine 814 to phenylalanine 1095. ATP is bound by residues valine 820–valine 828 and lysine 842. The active-site Proton acceptor is aspartate 941. Position 983 is a phosphotyrosine (tyrosine 983). Position 991 is a phosphothreonine (threonine 991).

The protein belongs to the protein kinase superfamily. Ser/Thr protein kinase family.

Its subcellular location is the mitochondrion membrane. It catalyses the reaction L-seryl-[protein] + ATP = O-phospho-L-seryl-[protein] + ADP + H(+). It carries out the reaction L-threonyl-[protein] + ATP = O-phospho-L-threonyl-[protein] + ADP + H(+). The polypeptide is Probable LRR receptor-like serine/threonine-protein kinase At1g74360 (Arabidopsis thaliana (Mouse-ear cress)).